The chain runs to 361 residues: Chorismate synthase (361 aa).

R48 and R54 together coordinate NADP(+). FMN is bound by residues 125–127, 238–239, G278, 293–297, and R319; these read RSS, NA, and KPTSS.

This sequence belongs to the chorismate synthase family. In terms of assembly, homotetramer. The cofactor is FMNH2.

It catalyses the reaction 5-O-(1-carboxyvinyl)-3-phosphoshikimate = chorismate + phosphate. Its pathway is metabolic intermediate biosynthesis; chorismate biosynthesis; chorismate from D-erythrose 4-phosphate and phosphoenolpyruvate: step 7/7. In terms of biological role, catalyzes the anti-1,4-elimination of the C-3 phosphate and the C-6 proR hydrogen from 5-enolpyruvylshikimate-3-phosphate (EPSP) to yield chorismate, which is the branch point compound that serves as the starting substrate for the three terminal pathways of aromatic amino acid biosynthesis. This reaction introduces a second double bond into the aromatic ring system. The polypeptide is Chorismate synthase (Vibrio vulnificus (strain CMCP6)).